A 231-amino-acid chain; its full sequence is NADH-ubiquinone oxidoreductase chain 4 (231 aa).

The next 6 membrane-spanning stretches (helical) occupy residues Pro1–Ile21, Met34–Leu54, Ile63–Gly85, Ala89–Tyr111, Ile128–Pro148, and Leu156–Ser176.

Belongs to the complex I subunit 4 family.

The protein resides in the mitochondrion membrane. The catalysed reaction is a ubiquinone + NADH + 5 H(+)(in) = a ubiquinol + NAD(+) + 4 H(+)(out). In terms of biological role, core subunit of the mitochondrial membrane respiratory chain NADH dehydrogenase (Complex I) that is believed to belong to the minimal assembly required for catalysis. Complex I functions in the transfer of electrons from NADH to the respiratory chain. The immediate electron acceptor for the enzyme is believed to be ubiquinone. The chain is NADH-ubiquinone oxidoreductase chain 4 (MT-ND4) from Bothriechis lateralis (Side-striped palm pitviper).